Reading from the N-terminus, the 86-residue chain is Large ribosomal subunit protein bL31B (86 aa).

The protein belongs to the bacterial ribosomal protein bL31 family. Type B subfamily. As to quaternary structure, part of the 50S ribosomal subunit.

This is Large ribosomal subunit protein bL31B from Burkholderia lata (strain ATCC 17760 / DSM 23089 / LMG 22485 / NCIMB 9086 / R18194 / 383).